The following is a 130-amino-acid chain: MAQVQYYGTGRRKSSVARVRLVPGDGRIIVNKQDIREYIPTEALIEMVKQPLVLTETLGSYDVLVNVHGGGFAGQAGAIRHGIARALLQVDPEFRTVLKRAGLLTRDARVKERKKYGLKGARRAPQFSKR.

This sequence belongs to the universal ribosomal protein uS9 family.

In Geobacillus stearothermophilus (Bacillus stearothermophilus), this protein is Small ribosomal subunit protein uS9 (rpsI).